Reading from the N-terminus, the 288-residue chain is Proteasome subunit beta (288 aa).

Positions 1–57 (MTVDGQVGRWPVSAIPAAYMRPGSGSFTEFLAGAEPHLLPGRAGAQPAGAAPAVPHG) are cleaved as a propeptide — removed in mature form; by autocatalysis. The active-site Nucleophile is threonine 58.

It belongs to the peptidase T1B family. As to quaternary structure, the 20S proteasome core is composed of 14 alpha and 14 beta subunits that assemble into four stacked heptameric rings, resulting in a barrel-shaped structure. The two inner rings, each composed of seven catalytic beta subunits, are sandwiched by two outer rings, each composed of seven alpha subunits. The catalytic chamber with the active sites is on the inside of the barrel. Has a gated structure, the ends of the cylinder being occluded by the N-termini of the alpha-subunits. Is capped by the proteasome-associated ATPase, ARC.

The protein resides in the cytoplasm. It carries out the reaction Cleavage of peptide bonds with very broad specificity.. Its pathway is protein degradation; proteasomal Pup-dependent pathway. With respect to regulation, the formation of the proteasomal ATPase ARC-20S proteasome complex, likely via the docking of the C-termini of ARC into the intersubunit pockets in the alpha-rings, may trigger opening of the gate for substrate entry. Interconversion between the open-gate and close-gate conformations leads to a dynamic regulation of the 20S proteasome proteolysis activity. Functionally, component of the proteasome core, a large protease complex with broad specificity involved in protein degradation. This chain is Proteasome subunit beta, found in Nakamurella multipartita (strain ATCC 700099 / DSM 44233 / CIP 104796 / JCM 9543 / NBRC 105858 / Y-104) (Microsphaera multipartita).